The following is an 864-amino-acid chain: DNA mismatch repair protein MutS (864 aa).

607–614 (GPNMGGKS) lines the ATP pocket.

It belongs to the DNA mismatch repair MutS family.

Functionally, this protein is involved in the repair of mismatches in DNA. It is possible that it carries out the mismatch recognition step. This protein has a weak ATPase activity. The polypeptide is DNA mismatch repair protein MutS (Neisseria meningitidis serogroup A / serotype 4A (strain DSM 15465 / Z2491)).